The chain runs to 79 residues: ATP synthase subunit 9, mitochondrial (79 aa).

A run of 2 helical transmembrane segments spans residues 21–41 (SGLIGAGAGVGIVFGCLILAF) and 59–79 (FALTEAIGLLALVMAFLILFI).

It belongs to the ATPase C chain family. F-type ATPases have 2 components, CF(1) - the catalytic core - and CF(0) - the membrane proton channel. CF(1) has five subunits: alpha(3), beta(3), gamma(1), delta(1), epsilon(1). CF(0) has three main subunits: a, b and c.

The protein localises to the mitochondrion membrane. Its function is as follows. Mitochondrial membrane ATP synthase (F(1)F(0) ATP synthase or Complex V) produces ATP from ADP in the presence of a proton gradient across the membrane which is generated by electron transport complexes of the respiratory chain. F-type ATPases consist of two structural domains, F(1) - containing the extramembraneous catalytic core and F(0) - containing the membrane proton channel, linked together by a central stalk and a peripheral stalk. During catalysis, ATP synthesis in the catalytic domain of F(1) is coupled via a rotary mechanism of the central stalk subunits to proton translocation. Part of the complex F(0) domain. A homomeric c-ring of probably 10 subunits is part of the complex rotary element. The protein is ATP synthase subunit 9, mitochondrial (ATP9) of Acanthamoeba castellanii (Amoeba).